Consider the following 391-residue polypeptide: Elongation factor Tu (391 aa).

The tr-type G domain occupies 10–201; the sequence is KPHVNIGTIG…AVDEYIPTPA (192 aa). The tract at residues 19-26 is G1; the sequence is GHVDHGKT. GTP is bound at residue 19 to 26; sequence GHVDHGKT. Residue T26 participates in Mg(2+) binding. Residues 55 to 59 are G2; sequence GITIS. A G3 region spans residues 76 to 79; sequence DCPG. GTP is bound by residues 76-80 and 131-134; these read DCPGH and NKVD. Positions 131–134 are G4; that stretch reads NKVD. Positions 169–171 are G5; the sequence is SAL.

The protein belongs to the TRAFAC class translation factor GTPase superfamily. Classic translation factor GTPase family. EF-Tu/EF-1A subfamily. As to quaternary structure, monomer.

Its subcellular location is the cytoplasm. It carries out the reaction GTP + H2O = GDP + phosphate + H(+). In terms of biological role, GTP hydrolase that promotes the GTP-dependent binding of aminoacyl-tRNA to the A-site of ribosomes during protein biosynthesis. This chain is Elongation factor Tu, found in Cereibacter sphaeroides (strain ATCC 17029 / ATH 2.4.9) (Rhodobacter sphaeroides).